The chain runs to 320 residues: Arylacetonitrilase (320 aa).

The CN hydrolase domain maps to 5-286; sequence IKASVVQAST…EGVISAELDL (282 aa). Glu-46 functions as the Proton acceptor in the catalytic mechanism. Lys-133 is a catalytic residue. Cys-178 acts as the Nucleophile in catalysis.

Belongs to the carbon-nitrogen hydrolase superfamily. Nitrilase family.

The catalysed reaction is a nitrile + 2 H2O = a carboxylate + NH4(+). Nitrilase that hydrolyzes preferentially fumaronitrile, while 3-phenylpropionitrile, beta-cyano-L-alanine and 4-cyanopyridine are transformed at much lower rates. The sequence is that of Arylacetonitrilase (nit) from Trametes versicolor (strain FP-101664) (White-rot fungus).